Here is a 391-residue protein sequence, read N- to C-terminus: Pyruvate dehydrogenase E1 component subunit alpha, testis-specific form, mitochondrial (391 aa).

Residues 1 to 30 (MRKMLATVLSQVFSGMVQKPALRGLLSSLK) constitute a mitochondrion transit peptide. Residues histidine 93, tyrosine 119, arginine 120, alanine 158, glycine 166, valine 168, aspartate 197, glycine 198, alanine 199, asparagine 226, and tyrosine 228 each coordinate pyruvate. Residues tyrosine 119 and arginine 120 each contribute to the thiamine diphosphate site. 6 residues coordinate thiamine diphosphate: glycine 166, valine 168, aspartate 197, glycine 198, alanine 199, and asparagine 226. Aspartate 197 is a Mg(2+) binding site. 2 residues coordinate Mg(2+): asparagine 226 and tyrosine 228. Histidine 293 is a thiamine diphosphate binding site. 2 positions are modified to phosphoserine: serine 294 and serine 296. Serine 301 carries the phosphoserine; by PDK3 modification.

Heterotetramer of two PDHA2 and two PDHB subunits. The heterotetramer interacts with DLAT, and is part of the multimeric pyruvate dehydrogenase complex that contains multiple copies of pyruvate dehydrogenase (E1), dihydrolipoamide acetyltransferase (DLAT, E2) and lipoamide dehydrogenase (DLD, E3). These subunits are bound to an inner core composed of about 48 DLAT and 12 PDHX molecules. The cofactor is thiamine diphosphate. It depends on Mg(2+) as a cofactor. In terms of tissue distribution, testis.

Its subcellular location is the mitochondrion matrix. It catalyses the reaction N(6)-[(R)-lipoyl]-L-lysyl-[protein] + pyruvate + H(+) = N(6)-[(R)-S(8)-acetyldihydrolipoyl]-L-lysyl-[protein] + CO2. Its activity is regulated as follows. Pyruvate dehydrogenase activity is inhibited by phosphorylation of PDHA2; it is reactivated by dephosphorylation. Functionally, the pyruvate dehydrogenase complex catalyzes the overall conversion of pyruvate to acetyl-CoA and CO(2), and thereby links the glycolytic pathway to the tricarboxylic cycle. This Rattus norvegicus (Rat) protein is Pyruvate dehydrogenase E1 component subunit alpha, testis-specific form, mitochondrial (Pdha2).